The primary structure comprises 341 residues: NADH-quinone oxidoreductase subunit H (341 aa).

Transmembrane regions (helical) follow at residues P38–V58, I70–I90, I115–G135, M161–V181, M187–L207, L239–F259, I275–T295, and V314–G334.

The protein belongs to the complex I subunit 1 family. NDH-1 is composed of 14 different subunits. Subunits NuoA, H, J, K, L, M, N constitute the membrane sector of the complex.

It is found in the cell membrane. The enzyme catalyses a quinone + NADH + 5 H(+)(in) = a quinol + NAD(+) + 4 H(+)(out). NDH-1 shuttles electrons from NADH, via FMN and iron-sulfur (Fe-S) centers, to quinones in the respiratory chain. The immediate electron acceptor for the enzyme in this species is believed to be ubiquinone. Couples the redox reaction to proton translocation (for every two electrons transferred, four hydrogen ions are translocated across the cytoplasmic membrane), and thus conserves the redox energy in a proton gradient. This subunit may bind ubiquinone. This is NADH-quinone oxidoreductase subunit H from Wolbachia sp. subsp. Brugia malayi (strain TRS).